The primary structure comprises 397 residues: Acetylornithine aminotransferase (397 aa).

Phe129 is a pyridoxal 5'-phosphate binding site. Arg132 is a binding site for N(2)-acetyl-L-ornithine. Position 214 to 217 (214 to 217 (DEVQ)) interacts with pyridoxal 5'-phosphate. At Lys243 the chain carries N6-(pyridoxal phosphate)lysine. A N(2)-acetyl-L-ornithine-binding site is contributed by Ser271. Thr272 is a pyridoxal 5'-phosphate binding site.

Belongs to the class-III pyridoxal-phosphate-dependent aminotransferase family. ArgD subfamily. In terms of assembly, homodimer. Pyridoxal 5'-phosphate serves as cofactor.

It is found in the cytoplasm. The enzyme catalyses N(2)-acetyl-L-ornithine + 2-oxoglutarate = N-acetyl-L-glutamate 5-semialdehyde + L-glutamate. Its pathway is amino-acid biosynthesis; L-arginine biosynthesis; N(2)-acetyl-L-ornithine from L-glutamate: step 4/4. The protein is Acetylornithine aminotransferase of Neisseria meningitidis serogroup A / serotype 4A (strain DSM 15465 / Z2491).